Reading from the N-terminus, the 322-residue chain is Putative MgpC-like protein MPN_367 (322 aa).

The segment covering Met1–Asn48 has biased composition (low complexity). Disordered regions lie at residues Met1–Ser59 and Asp118–Leu145. Residues Thr120–Gly134 show a composition bias toward polar residues.

Belongs to the MgpC family.

This is Putative MgpC-like protein MPN_367 from Mycoplasma pneumoniae (strain ATCC 29342 / M129 / Subtype 1) (Mycoplasmoides pneumoniae).